Here is a 321-residue protein sequence, read N- to C-terminus: Probable 1-aminocyclopropane-1-carboxylate oxidase (321 aa).

A Fe2OG dioxygenase domain is found at proline 159–proline 259. Residues histidine 183, aspartate 185, and histidine 240 each coordinate Fe cation.

The protein belongs to the iron/ascorbate-dependent oxidoreductase family. It depends on Fe cation as a cofactor.

It catalyses the reaction 1-aminocyclopropane-1-carboxylate + L-ascorbate + O2 = ethene + L-dehydroascorbate + hydrogen cyanide + CO2 + 2 H2O. The protein operates within alkene biosynthesis; ethylene biosynthesis via S-adenosyl-L-methionine; ethylene from S-adenosyl-L-methionine: step 2/2. This Dianthus caryophyllus (Carnation) protein is Probable 1-aminocyclopropane-1-carboxylate oxidase (ACO).